Reading from the N-terminus, the 255-residue chain is Cyclic di-GMP phosphodiesterase PdeH (255 aa).

In terms of domain architecture, EAL spans Glu-13–Leu-255.

It catalyses the reaction 3',3'-c-di-GMP + H2O = 5'-phosphoguanylyl(3'-&gt;5')guanosine + H(+). Involved in the control of the switch from cell motility to adhesion via regulation of cellular levels of cyclic-di-GMP (c-di-GMP). Part of a signaling cascade that regulates curli biosynthesis. The cascade is composed of two c-di-GMP control modules, in which c-di-GMP controlled by the DgcE/PdeH pair (module I) regulates the activity of the DgcM/PdeR pair (module II), which in turn regulates activity of the transcription factor MlrA and expression of the master biofilm regulator csgD. Effect on flagella is controlled via the c-di-GMP-binding flagellar brake protein YcgR. This Escherichia coli (strain K12) protein is Cyclic di-GMP phosphodiesterase PdeH.